We begin with the raw amino-acid sequence, 310 residues long: Protoheme IX farnesyltransferase (310 aa).

The next 9 helical transmembrane spans lie at 31-51, 52-72, 102-119, 123-145, 151-171, 179-199, 225-245, 248-268, and 281-301; these read VMSLVIFTGFVGMWLAPDSIH, PLIAGIAVICIALGAGSAGAM, ALSFGLITGFFAVFFMAL, ILASFLLLFTIFYYICIYTIWLK, NIVIGGVSGALPPVIGHAAVS, IILFLIIFIWTPPHSWAIALF, ILIYSIILFIVSLMPFFIGMN, IYLIIVCIIGLVFLYYAFSLF, and FTYSIFYLCFIFILLSSTSTI.

This sequence belongs to the UbiA prenyltransferase family. Protoheme IX farnesyltransferase subfamily.

Its subcellular location is the cell inner membrane. It carries out the reaction heme b + (2E,6E)-farnesyl diphosphate + H2O = Fe(II)-heme o + diphosphate. Its pathway is porphyrin-containing compound metabolism; heme O biosynthesis; heme O from protoheme: step 1/1. Its function is as follows. Converts heme B (protoheme IX) to heme O by substitution of the vinyl group on carbon 2 of heme B porphyrin ring with a hydroxyethyl farnesyl side group. The polypeptide is Protoheme IX farnesyltransferase (Rickettsia prowazekii (strain Madrid E)).